Reading from the N-terminus, the 220-residue chain is Zinc-finger homeodomain protein 2 (220 aa).

Residues 1 to 11 (MNFEDQEEDME) show a composition bias toward acidic residues. Residues 1-40 (MNFEDQEEDMEMSGVNPPCGYDSLSGEGATSSGGGGVGRS) form a disordered region. Residues 31 to 40 (SSGGGGVGRS) are compositionally biased toward gly residues. The segment at 49-98 (YRECLKNHAVNIGGHAVDGCCEFMPSGEDGTLDALKCAACGCHRNFHRKE) adopts a ZF-HD dimerization-type zinc-finger fold. The segment at 100–160 (ESIGGRAHRV…SSSGGTTKRF (61 aa)) is disordered. The homeobox; atypical DNA-binding region spans 157–220 (TKRFRTKFTA…NNKNSLGKKP (64 aa)).

In terms of assembly, homo or heterodimer. Interacts with ZHD1, ZHD3, ZHD4, ZHD5, ZHD6, ZHD7, ZHD8, ZHD9, ZHD10 and ZHD11. As to expression, mostly expressed in flowers and, to a lower extent, in inflorescence, stems and leaves.

It localises to the nucleus. Its function is as follows. Essential protein. Putative transcription factor. This Arabidopsis thaliana (Mouse-ear cress) protein is Zinc-finger homeodomain protein 2 (ZHD1).